Here is a 316-residue protein sequence, read N- to C-terminus: Protein lifeguard 2 (316 aa).

A disordered region spans residues 1 to 53 (MTQGKLSVANKAPGTEGQQQVHGEKKEAPAVPSAPPSYEEATSGEGMKAGAFP). 3 consecutive transmembrane segments (helical) span residues 106-126 (VYTI…LFTF), 138-158 (PGWY…LACC), and 165-185 (FPWN…LTGM). The N-linked (GlcNAc...) asparagine glycan is linked to N191. The next 4 membrane-spanning stretches (helical) occupy residues 194-214 (SVLL…VFSF), 225-245 (GVLF…AILL), 250-270 (VPWL…LFLA), and 290-310 (IFGA…FLQL).

It belongs to the BI1 family. LFG subfamily. As to quaternary structure, interacts with FAS/TNFRSF6 and BAX. As to expression, highly expressed in breast carcinoma tissues. Enhanced expression correlates with the grade of the tumor (grade II/grade III) in primary breast tumors (at protein level). Widely expressed. Expressed at high levels in the brain especially in the hippocampus.

It localises to the cell membrane. It is found in the membrane raft. The protein localises to the postsynaptic cell membrane. Its function is as follows. Antiapoptotic protein which protects cells uniquely from Fas-induced apoptosis. Regulates Fas-mediated apoptosis in neurons by interfering with caspase-8 activation. May play a role in cerebellar development by affecting cerebellar size, internal granular layer (IGL) thickness, and Purkinje cell (PC) development. This Homo sapiens (Human) protein is Protein lifeguard 2 (FAIM2).